We begin with the raw amino-acid sequence, 387 residues long: DNA double-strand break repair protein Mre11 (387 aa).

Residues aspartate 9, histidine 11, aspartate 50, and asparagine 85 each contribute to the Mn(2+) site. The active-site Proton donor is histidine 86. 3 residues coordinate Mn(2+): histidine 150, aspartate 181, and histidine 183. Positions 365–387 (AVLDDDADAADDDGRPTTVEEFQ) are disordered. Positions 366 to 375 (VLDDDADAAD) are enriched in acidic residues.

This sequence belongs to the MRE11/RAD32 family. As to quaternary structure, homodimer. Forms a heterotetramer composed of two Mre11 subunits and two Rad50 subunits. It depends on Mn(2+) as a cofactor.

Its activity is regulated as follows. Nuclease activity is regulated by Rad50. In terms of biological role, part of the Rad50/Mre11 complex, which is involved in the early steps of DNA double-strand break (DSB) repair. Mre11 binds to DSB ends and has both double-stranded 3'-5' exonuclease activity and single-stranded endonuclease activity. The sequence is that of DNA double-strand break repair protein Mre11 from Halobacterium salinarum (strain ATCC 700922 / JCM 11081 / NRC-1) (Halobacterium halobium).